Here is a 287-residue protein sequence, read N- to C-terminus: Nucleotide-binding protein TGRD_433 (287 aa).

Residue 9–16 (GMSGAGKS) participates in ATP binding. A GTP-binding site is contributed by 60 to 63 (DSRA).

The protein belongs to the RapZ-like family.

Functionally, displays ATPase and GTPase activities. The sequence is that of Nucleotide-binding protein TGRD_433 from Endomicrobium trichonymphae.